A 291-amino-acid polypeptide reads, in one-letter code: Taste receptor type 2 member 16 (291 aa).

A topological domain (extracellular) is located at residue M1. Residues 2 to 22 (IPIQLTVFFMIIYVLESLTII) form a helical membrane-spanning segment. The Cytoplasmic segment spans residues 23–41 (VQSSLIVAVLGREWLQVRR). Residues 42–62 (LMPVDMILISLGISRFCLQWA) form a helical membrane-spanning segment. Residues 63–84 (SMLNNFCSYFNLNYVLCNLTIT) lie on the Extracellular side of the membrane. The N-linked (GlcNAc...) asparagine glycan is linked to N80. A helical membrane pass occupies residues 85–105 (WEFFNILTFWLNSLLTVFYCI). The Cytoplasmic segment spans residues 106-125 (KVSSFTHHIFLWLRWRILRL). The helical transmembrane segment at 126–146 (FPWILLGSLMITCVTIIPSAI) threads the bilayer. The Extracellular portion of the chain corresponds to 147–182 (GNYIQIQLLTMEHLPRNSTVTDKLEKFHQYQFQAHT). N-linked (GlcNAc...) asparagine glycosylation is present at N163. Residues 183 to 203 (VALVIPFILFLASTILLMASL) traverse the membrane as a helical segment. At 204–228 (TKQIQHHSTGHCNPSMKAHFTALRS) the chain is on the cytoplasmic side. Residues 229–249 (LAVLFIVFTSYFLTILITIIG) form a helical membrane-spanning segment. Over 250–257 (TLFDKRCW) the chain is Extracellular. The helical transmembrane segment at 258–278 (LWVWEAFVYAFILMHSTSLML) threads the bilayer. The Cytoplasmic portion of the chain corresponds to 279 to 291 (SSPTLKRILKGKC).

This sequence belongs to the G-protein coupled receptor T2R family. As to quaternary structure, interacts with RTP3 and RTP4.

The protein resides in the cell membrane. Its function is as follows. Receptor that may play a role in the perception of bitterness and is gustducin-linked. May play a role in sensing the chemical composition of the gastrointestinal content. The activity of this receptor may stimulate alpha gustducin, mediate PLC-beta-2 activation and lead to the gating of TRPM5. The polypeptide is Taste receptor type 2 member 16 (TAS2R16) (Pan troglodytes (Chimpanzee)).